Consider the following 216-residue polypeptide: FMN-dependent NADH:quinone oxidoreductase 2 (216 aa).

FMN is bound by residues Ser-9, 15–17 (SVS), 96–99 (MYNF), and 140–143 (SRGG).

The protein belongs to the azoreductase type 1 family. Homodimer. FMN is required as a cofactor.

The catalysed reaction is 2 a quinone + NADH + H(+) = 2 a 1,4-benzosemiquinone + NAD(+). The enzyme catalyses N,N-dimethyl-1,4-phenylenediamine + anthranilate + 2 NAD(+) = 2-(4-dimethylaminophenyl)diazenylbenzoate + 2 NADH + 2 H(+). Its function is as follows. Quinone reductase that provides resistance to thiol-specific stress caused by electrophilic quinones. Also exhibits azoreductase activity. Catalyzes the reductive cleavage of the azo bond in aromatic azo compounds to the corresponding amines. This chain is FMN-dependent NADH:quinone oxidoreductase 2, found in Xanthomonas axonopodis pv. citri (strain 306).